Reading from the N-terminus, the 467-residue chain is ATP-dependent rRNA helicase rrp3 (467 aa).

The disordered stretch occupies residues 1 to 48; sequence MPGVKKRKVAREAPAPAPAQESDVESSTPEQTQEPEAQEQEQEEGQSK. The short motif at 48–76 is the Q motif element; that stretch reads KTFKELGIIEQLCEACETMGYKAPTPIQR. Positions 79 to 250 constitute a Helicase ATP-binding domain; sequence IPLALKGRDL…RASLSNPLRV (172 aa). 92–99 provides a ligand contact to ATP; the sequence is AETGSGKT. The short motif at 198–201 is the DEAD box element; sequence DEAD. A Helicase C-terminal domain is found at 262–422; the sequence is TLLQSYLFIP…EYDCPKDEVM (161 aa). Residues 439–467 form a disordered region; sequence MKDYNEKKGSRGKKFGGKRSRDEMDQEEG.

Belongs to the DEAD box helicase family. DDX47/RRP3 subfamily. In terms of assembly, interacts with the SSU processome.

The protein localises to the nucleus. The catalysed reaction is ATP + H2O = ADP + phosphate + H(+). Its function is as follows. ATP-dependent rRNA helicase required for pre-ribosomal RNA processing. Involved in the maturation of the 35S-pre-rRNA and to its cleavage to mature 18S rRNA. This chain is ATP-dependent rRNA helicase rrp3, found in Aspergillus niger (strain ATCC MYA-4892 / CBS 513.88 / FGSC A1513).